An 884-amino-acid polypeptide reads, in one-letter code: E3 ubiquitin-protein ligase BRE1-like 1 (884 aa).

The segment at 1 to 37 is disordered; it reads MGSTGEPDRKRRLSSSVAPGGGAPVSPAKRLAVAPTS. The stretch at 49-86 forms a coiled coil; that stretch reads YKNQKLSEQLEAHKFEYRALENKFAGLKEKQRTHNETL. The segment at 107–127 is disordered; sequence KSGSPNSSPGSGHNNVQKDGT. Residues 108 to 121 show a composition bias toward low complexity; it reads SGSPNSSPGSGHNN. Coiled coils occupy residues 216–541, 580–663, 696–762, and 789–827; these read LNNV…ELKL, SKLE…LQQI, RNLQ…QSLD, and KKRI…KEYR. The RING-type zinc finger occupies 832-871; that stretch reads CGICHDRQKEVVITKCYHLFCNQCIQKSLGNRQRRCPSCS.

The protein belongs to the BRE1 family. As to quaternary structure, interacts with SKIPA. Interacts with HUB2.

Its subcellular location is the nucleus. The enzyme catalyses S-ubiquitinyl-[E2 ubiquitin-conjugating enzyme]-L-cysteine + [acceptor protein]-L-lysine = [E2 ubiquitin-conjugating enzyme]-L-cysteine + N(6)-ubiquitinyl-[acceptor protein]-L-lysine.. Its pathway is protein modification; protein ubiquitination. E3 ubiquitin-protein ligase that monoubiquitinates H2B to form H2BK143ub1. H2BK143ub1 gives a specific tag for epigenetic transcriptional activation and is a prerequisite for H3 Lys-4 methylation (H3K4me). It thereby plays a central role in histone code and gene regulation. H2B monoubiquitination (H2BK143ub1), mediated by HUB1, modulates transcriptional regulation of anther development, likely by promoting histone H3K4 dimethylation (H3K4me2) in the chromatin of the key tapetum degradation-related genes C4, CP1 and UDT1. The protein is E3 ubiquitin-protein ligase BRE1-like 1 of Oryza sativa subsp. japonica (Rice).